The following is a 67-amino-acid chain: MTLTGKVKWFNSEKGFGFIEVEGGNDVFVHFSAITGDGFKSLDEGQEVSFEVEDGNRGPQAKNVVKL.

The CSD domain occupies 5–64 (GKVKWFNSEKGFGFIEVEGGNDVFVHFSAITGDGFKSLDEGQEVSFEVEDGNRGPQAKNV).

As to quaternary structure, homodimer.

Its subcellular location is the cytoplasm. Functionally, can bind to ATTGG and CCAAT motifs (Y-box motifs) of single-stranded oligonucleotides. The polypeptide is Cold shock-like protein CspE (cspE) (Bacillus anthracis).